The primary structure comprises 1131 residues: Phytochrome a (1131 aa).

The span at 1–23 (MSSSRPAHSSSSSSRTRQSSQAR) shows a compositional bias: low complexity. Positions 1–26 (MSSSRPAHSSSSSSRTRQSSQARILA) are disordered. The GAF domain maps to 219–404 (SMEALCNTVV…VFAVHVNKEF (186 aa)). C324 provides a ligand contact to phytochromobilin. PAS domains follow at residues 620 to 690 (VTSE…LQGK) and 750 to 834 (VEGD…LAGE). Residues 904-1124 (YMRHAINKPL…TFILTAELAA (221 aa)) form the Histidine kinase domain.

It belongs to the phytochrome family. In terms of assembly, homodimer. Contains one covalently linked phytochromobilin chromophore.

In terms of biological role, regulatory photoreceptor which exists in two forms that are reversibly interconvertible by light: the Pr form that absorbs maximally in the red region of the spectrum and the Pfr form that absorbs maximally in the far-red region. Photoconversion of Pr to Pfr induces an array of morphogenic responses, whereas reconversion of Pfr to Pr cancels the induction of those responses. Pfr controls the expression of a number of nuclear genes including those encoding the small subunit of ribulose-bisphosphate carboxylase, chlorophyll A/B binding protein, protochlorophyllide reductase, rRNA, etc. It also controls the expression of its own gene(s) in a negative feedback fashion. The polypeptide is Phytochrome a (PHYA) (Sorghum bicolor (Sorghum)).